The following is a 199-amino-acid chain: Achaete-scute homolog 1 (199 aa).

Residues 37 to 56 (PAEEQQASKAKPIKRQRSAS) form a disordered region. The bHLH domain occupies 81–133 (AAVARRNERERNRVKLVNLGFATLREHVPNGAANKKMSKVETLRSAVEYIRAL). Residues 162-179 (HDMNSMAGSPVSSYSSDE) show a composition bias toward polar residues. Positions 162–189 (HDMNSMAGSPVSSYSSDEGSYDPLSPEE) are disordered.

Efficient DNA binding requires dimerization with another bHLH protein. In terms of tissue distribution, neuronal precursor cells.

The protein resides in the nucleus. Its function is as follows. Transcription factor that plays a key role in neuronal differentiation: acts as a pioneer transcription factor, accessing closed chromatin to allow other factors to bind and activate neural pathways. Directly binds the E box motif (5'-CANNTG-3') on promoters and promotes transcription of neuronal genes. The combination of three transcription factors, ASCL1, POU3F2/BRN2 and MYT1L, is sufficient to reprogram fibroblasts and other somatic cells into induced neuronal (iN) cells in vitro. This is Achaete-scute homolog 1 (ascl1) from Xenopus laevis (African clawed frog).